Reading from the N-terminus, the 123-residue chain is Snaclec echicetin subunit beta (123 aa).

The region spanning 1–121 (NCLPDWSVYE…SGEFYFVCKC (121 aa)) is the C-type lectin domain. 3 cysteine pairs are disulfide-bonded: Cys-2–Cys-13, Cys-30–Cys-119, and Cys-96–Cys-111.

This sequence belongs to the snaclec family. Heterodimer of subunits alpha and beta; disulfide-linked. Forms an active complex with the pentameric immunoglobuline Mkappa (IgMkappa). Expressed by the venom gland.

It localises to the secreted. In terms of biological role, echicetin itself inhibits aggregation of washed platelets induced by vWF, thrombin or alboaggregin-A. However, when complexed with the pentameric plasma immunoglobulin Mkappa (IgMkappa), echicetin binds specifically to GPIb and activates platelets. This is caused by P-selectin expression and activation of alpha-IIb/beta-3 as well as tyrosine phosphorylation of several signal transduction molecules, including p53/56(LYN), p64, p72(SYK), p70 to p90, and p120. In vivo, it induces thrombocytopenia when injected into mice, probably accounting of activation of platelets rather than inhibition. This is Snaclec echicetin subunit beta from Echis carinatus sochureki (Saw-scaled viper).